The primary structure comprises 300 residues: Putative zinc finger protein 705EP (300 aa).

The KRAB domain occupies valine 7–proline 78. Residues tyrosine 172–histidine 194 form a C2H2-type 1; degenerate zinc finger. 2 C2H2-type zinc fingers span residues tyrosine 200–histidine 222 and tyrosine 228–histidine 250. The C2H2-type 4; degenerate zinc-finger motif lies at tyrosine 256–histidine 278.

This sequence belongs to the krueppel C2H2-type zinc-finger protein family.

Its subcellular location is the nucleus. Functionally, may be involved in transcriptional regulation. The sequence is that of Putative zinc finger protein 705EP from Homo sapiens (Human).